We begin with the raw amino-acid sequence, 458 residues long: Phosphoglucosamine mutase (458 aa).

Serine 106 (phosphoserine intermediate) is an active-site residue. Serine 106, aspartate 247, aspartate 249, and aspartate 251 together coordinate Mg(2+). The residue at position 106 (serine 106) is a Phosphoserine.

Belongs to the phosphohexose mutase family. Requires Mg(2+) as cofactor. Post-translationally, activated by phosphorylation.

It catalyses the reaction alpha-D-glucosamine 1-phosphate = D-glucosamine 6-phosphate. Its function is as follows. Catalyzes the conversion of glucosamine-6-phosphate to glucosamine-1-phosphate. This Chlamydia abortus (strain DSM 27085 / S26/3) (Chlamydophila abortus) protein is Phosphoglucosamine mutase.